Reading from the N-terminus, the 228-residue chain is ATP synthase F(0) complex subunit a (228 aa).

Transmembrane regions (helical) follow at residues 13 to 33 (NILA…IFPM), 69 to 89 (WALI…LGLL), 98 to 118 (QLSM…LIGL), 139 to 159 (IPTL…ALGV), and 194 to 214 (ILLF…ALVF).

Belongs to the ATPase A chain family. In terms of assembly, component of the ATP synthase complex composed at least of ATP5F1A/subunit alpha, ATP5F1B/subunit beta, ATP5MC1/subunit c (homooctomer), MT-ATP6/subunit a, MT-ATP8/subunit 8, ATP5ME/subunit e, ATP5MF/subunit f, ATP5MG/subunit g, ATP5MK/subunit k, ATP5MJ/subunit j, ATP5F1C/subunit gamma, ATP5F1D/subunit delta, ATP5F1E/subunit epsilon, ATP5PF/subunit F6, ATP5PB/subunit b, ATP5PD/subunit d, ATP5PO/subunit OSCP. ATP synthase complex consists of a soluble F(1) head domain (subunits alpha(3) and beta(3)) - the catalytic core - and a membrane F(0) domain - the membrane proton channel (subunits c, a, 8, e, f, g, k and j). These two domains are linked by a central stalk (subunits gamma, delta, and epsilon) rotating inside the F1 region and a stationary peripheral stalk (subunits F6, b, d, and OSCP). Interacts with DNAJC30; interaction is direct.

The protein localises to the mitochondrion inner membrane. It carries out the reaction H(+)(in) = H(+)(out). Functionally, subunit a, of the mitochondrial membrane ATP synthase complex (F(1)F(0) ATP synthase or Complex V) that produces ATP from ADP in the presence of a proton gradient across the membrane which is generated by electron transport complexes of the respiratory chain. ATP synthase complex consist of a soluble F(1) head domain - the catalytic core - and a membrane F(1) domain - the membrane proton channel. These two domains are linked by a central stalk rotating inside the F(1) region and a stationary peripheral stalk. During catalysis, ATP synthesis in the catalytic domain of F(1) is coupled via a rotary mechanism of the central stalk subunits to proton translocation. With the subunit c (ATP5MC1), forms the proton-conducting channel in the F(0) domain, that contains two crucial half-channels (inlet and outlet) that facilitate proton movement from the mitochondrial intermembrane space (IMS) into the matrix. Protons are taken up via the inlet half-channel and released through the outlet half-channel, following a Grotthuss mechanism. The polypeptide is ATP synthase F(0) complex subunit a (Pelomedusa subrufa (African side-necked turtle)).